Consider the following 574-residue polypeptide: Phosphate permease PHO89 (574 aa).

Residues Met-1–Gln-5 are Extracellular-facing. The helical transmembrane segment at Phe-6 to Ala-26 threads the bilayer. At Asn-27–Lys-43 the chain is on the cytoplasmic side. Residues Tyr-44–Ala-64 traverse the membrane as a helical segment. Residues Arg-65–Pro-84 lie on the Extracellular side of the membrane. The chain crosses the membrane as a helical span at residues Ala-85–Ala-105. Residues Thr-106–Ser-117 are Cytoplasmic-facing. Residues Ile-118–Gly-138 traverse the membrane as a helical segment. Residues Trp-139–Ile-145 lie on the Extracellular side of the membrane. Residues Ile-146–Ile-166 form a helical membrane-spanning segment. Topologically, residues Ser-167–Ala-184 are cytoplasmic. The helical transmembrane segment at Leu-185 to Trp-205 threads the bilayer. The Extracellular segment spans residues Lys-206–Ala-222. A helical membrane pass occupies residues Val-223–Phe-243. The Cytoplasmic portion of the chain corresponds to Tyr-244 to Trp-354. The tract at residues Glu-301–Glu-332 is disordered. Over residues Val-315–Glu-332 the composition is skewed to basic and acidic residues. A helical membrane pass occupies residues Pro-355–Val-375. The Extracellular segment spans residues Asn-376–Arg-398. The helical transmembrane segment at Val-399–Gly-419 threads the bilayer. The Cytoplasmic portion of the chain corresponds to Ala-420–Glu-447. The chain crosses the membrane as a helical span at residues Val-448–Gly-468. Topologically, residues Tyr-469 to Gln-503 are extracellular. A helical transmembrane segment spans residues Leu-504–Cys-524. Over Asn-525–Ser-541 the chain is Cytoplasmic. The helical transmembrane segment at Gly-542–Leu-562 threads the bilayer. Over Asn-563–Thr-574 the chain is Extracellular.

It belongs to the inorganic phosphate transporter (PiT) (TC 2.A.20) family. As to quaternary structure, forms homodimers and higher order homooligomers.

It localises to the cell membrane. It catalyses the reaction 2 Na(+)(out) + phosphate(out) = 2 Na(+)(in) + phosphate(in). With respect to regulation, weakly stimulated by Li(+) and K(+). Inhibited by monensin. Inhibited by phosphonoacetic acid. Inhibited by methylphosphonate. Inhibited by dimethylphosphonate. Sodium-phosphate symporter. Active in early growth phase. This is Phosphate permease PHO89 (PHO89) from Saccharomyces cerevisiae (strain ATCC 204508 / S288c) (Baker's yeast).